A 652-amino-acid polypeptide reads, in one-letter code: DNA ligase (652 aa).

NAD(+)-binding positions include 29-33 (DAEYD), 78-79 (SL), and E107. Residue K109 is the N6-AMP-lysine intermediate of the active site. The NAD(+) site is built by R130, E164, K278, and K302. 4 residues coordinate Zn(2+): C395, C398, C413, and C418. The 76-residue stretch at 577–652 (DENAALSGMT…IKDEAWLESL (76 aa)) folds into the BRCT domain.

It belongs to the NAD-dependent DNA ligase family. LigA subfamily. Requires Mg(2+) as cofactor. It depends on Mn(2+) as a cofactor.

It catalyses the reaction NAD(+) + (deoxyribonucleotide)n-3'-hydroxyl + 5'-phospho-(deoxyribonucleotide)m = (deoxyribonucleotide)n+m + AMP + beta-nicotinamide D-nucleotide.. In terms of biological role, DNA ligase that catalyzes the formation of phosphodiester linkages between 5'-phosphoryl and 3'-hydroxyl groups in double-stranded DNA using NAD as a coenzyme and as the energy source for the reaction. It is essential for DNA replication and repair of damaged DNA. This Streptococcus suis (strain 98HAH33) protein is DNA ligase.